Consider the following 748-residue polypeptide: Antigen peptide transporter 1 (748 aa).

The Cytoplasmic portion of the chain corresponds to 1–15 (MASSRCPAPRGCRCL). A helical membrane pass occupies residues 16 to 36 (PGASLAWLGTVLLLLADWVLL). Over 37 to 53 (RTALPRIFSLLVPTALP) the chain is Lumenal. A helical transmembrane segment spans residues 54–76 (LLRVWAVGLSRWAVLWLGACGVL). At 77–92 (RATVGSKSENAGAQGW) the chain is on the cytoplasmic side. A helical membrane pass occupies residues 93–113 (LAALKPLAAALGLALPGLALF). Residues 114-133 (RELISWGAPGSADSTRLLHW) lie on the Lumenal side of the membrane. A helical membrane pass occupies residues 134–154 (GSHPTAFVVSYAAALPAAALW). The Cytoplasmic portion of the chain corresponds to 155–186 (HKLGSLWVPGGQGGSGNPVRRLLGCLGSETRR). Residues 187 to 207 (LSLFLVLVVLSSLGEMAIPFF) form a helical membrane-spanning segment. Residues 187 to 470 (LSLFLVLVVL…LLSIYPRVQK (284 aa)) form the ABC transmembrane type-1 domain. The Lumenal portion of the chain corresponds to 208–227 (TGRLTDWILQDGSADTFTRN). A helical transmembrane segment spans residues 228–248 (LTLMSILTIASAVLEFVGDGI). Topologically, residues 249–298 (YNNTMGHVHSHLQGEVFGAVLRQETEFFQQNQTGNIMSRVTEDTSTLSDS) are cytoplasmic. A helical transmembrane segment spans residues 299 to 319 (LSENLSLFLWYLVRGLCLLGI). Topologically, residues 320 to 328 (MLWGSVSLT) are lumenal. The helical transmembrane segment at 329–349 (MVTLITLPLLFLLPKKVGKWY) threads the bilayer. The Cytoplasmic portion of the chain corresponds to 350-418 (QLLEVQVRES…AVNSWTTSIS (69 aa)). Residues 375–420 (PTVRSFANEEGEAQKFREKLQEIKTLNQKEAVAYAVNSWTTSISGM) are part of the peptide-binding site. Residues 419 to 439 (GMLLKVGILYIGGQLVTSGAV) form a helical membrane-spanning segment. The Lumenal segment spans residues 440–443 (SSGN). Residues 444–464 (LVTFVLYQMQFTQAVEVLLSI) traverse the membrane as a helical segment. The segment at 453-487 (QFTQAVEVLLSIYPRVQKAVGSSEKIFEYLDRTPR) is part of the peptide-binding site. The Cytoplasmic segment spans residues 465–748 (YPRVQKAVGS…MVQAPADAPE (284 aa)). Residues 503–742 (VQFQDVSFAY…KGCYWAMVQA (240 aa)) enclose the ABC transporter domain. Residues 538–546 (GPNGSGKST), 641–647 (SQLSGGQ), and glutamine 701 contribute to the ATP site. Residue serine 545 coordinates Mg(2+).

The protein belongs to the ABC transporter superfamily. ABCB family. MHC peptide exporter (TC 3.A.1.209) subfamily. Heterodimer of TAP1 and TAP2 (TAP1-TAP2). A component of the peptide loading complex (PLC), interacts via TAPBP with MHCI heterodimer; this interaction mediates peptide-MHCI assembly. Recruits TAPBP in a 1:1 stoichiometry. Interacts with classical MHCI such as HLA-A*02-B2M; this interaction is obligatory for the loading of peptide epitopes. Interacts with non-classical MHCI molecules including HLA-E-B2M and HLA-F-B2M as well as PLC component CALR before the peptide loading. Interacts with PSMB5 and PSMB8. In terms of assembly, (Microbial infection) Interacts with Epstein-Barr virus BNLF2a. As to quaternary structure, (Microbial infection) Interacts with herpes simplex virus US12/ICP47. (Microbial infection) Interacts with adenovirus E3-19K glycoprotein, which binds TAP1-TAP2 and acts as a TAPBP inhibitor, preventing TAP1-TAP2 association with MHCI. It depends on Mg(2+) as a cofactor. As to expression, highly expressed in professional APCs monocytes and dendritic cells as well as in lymphocyte subsets T cells, B cells and NK cells.

It localises to the endoplasmic reticulum membrane. It carries out the reaction a peptide antigen(in) + ATP + H2O = a peptide antigen(out) + ADP + phosphate + H(+). Its activity is regulated as follows. Inhibited at high ER lumenal peptide concentrations. With respect to regulation, (Microbial infection) Inhibited by herpes simplex virus US12/ICP47 protein, which blocks the peptide-binding site of TAP1-TAP2. (Microbial infection) Inhibited by human cytomegalovirus US6 glycoprotein, which binds to the lumenal side of TAP1-TAP2 complex and inhibits peptide translocation by specifically blocking ATP-binding and preventing TAP1-TAP2 conformational rearrangement induced by peptide binding. Its function is as follows. ABC transporter associated with antigen processing. In complex with TAP2 mediates unidirectional translocation of peptide antigens from cytosol to endoplasmic reticulum (ER) for loading onto MHC class I (MHCI) molecules. Uses the chemical energy of ATP to export peptides against the concentration gradient. During the transport cycle alternates between 'inward-facing' state with peptide binding site facing the cytosol to 'outward-facing' state with peptide binding site facing the ER lumen. Peptide antigen binding to ATP-loaded TAP1-TAP2 induces a switch to hydrolysis-competent 'outward-facing' conformation ready for peptide loading onto nascent MHCI molecules. Subsequently ATP hydrolysis resets the transporter to the 'inward facing' state for a new cycle. Typically transports intracellular peptide antigens of 8 to 13 amino acids that arise from cytosolic proteolysis via IFNG-induced immunoproteasome. Binds peptides with free N- and C-termini, the first three and the C-terminal residues being critical. Preferentially selects peptides having a highly hydrophobic residue at position 3 and hydrophobic or charged residues at the C-terminal anchor. Proline at position 2 has the most destabilizing effect. As a component of the peptide loading complex (PLC), acts as a molecular scaffold essential for peptide-MHCI assembly and antigen presentation. This Homo sapiens (Human) protein is Antigen peptide transporter 1.